The following is a 402-amino-acid chain: Deoxyguanosinetriphosphate triphosphohydrolase-like protein (402 aa).

A disordered region spans residues 20-39 (PAFSRGRLVPEPESPTRTPF). The region spanning 73–217 (RLTHTIEVAQ…AAIADDIAYN (145 aa)) is the HD domain.

This sequence belongs to the dGTPase family. Type 2 subfamily.

The sequence is that of Deoxyguanosinetriphosphate triphosphohydrolase-like protein from Brucella canis (strain ATCC 23365 / NCTC 10854 / RM-666).